The chain runs to 407 residues: Large ribosomal subunit protein uL3-like (407 aa).

Residues 1–31 (MSHRKFSAPRHGHLGFLPHKRSRRHRGKVKS) show a composition bias toward basic residues. The segment at 1–37 (MSHRKFSAPRHGHLGFLPHKRSRRHRGKVKSWPRDDP) is disordered.

It belongs to the universal ribosomal protein uL3 family. As to quaternary structure, component of the large ribosomal subunit (LSU). Part of a LSU subcomplex, the 5S RNP which is composed of the 5S RNA, RPL5 and RPL11. Interacts with NVL in an ATP-dependent manner. Interacts with RRP1B. Interacts with IPO5, IPO7 and KPNB1; these interactions may be involved in RPL5 nuclear import for the assembly of ribosomal subunits. Interacts with RRP1B. As to expression, expression is restricted to striated muscles.

In terms of biological role, heart- and skeletal muscle-specific component of the ribosome, which regulates muscle function. Component of the large ribosomal subunit in striated muscle cells: replaces the RPL3 paralog in the ribosome in these cells. The ribosome is a large ribonucleoprotein complex responsible for the synthesis of proteins in the cell. Inhibits myotube growth and muscle function. This Mus musculus (Mouse) protein is Large ribosomal subunit protein uL3-like.